A 213-amino-acid chain; its full sequence is Motile sperm domain-containing protein 1 (213 aa).

The MSP domain maps to 16 to 143 (PVFVFPTELI…KEHLTESVFF (128 aa)). A run of 2 helical transmembrane segments spans residues 159–179 (SLLT…PTLG) and 191–211 (LSVN…MAIL). The Nuclear export signal signature appears at 205-208 (LITM).

It is found in the endoplasmic reticulum membrane. It localises to the golgi apparatus membrane. Plays a role in differentiation and/or proliferation of mesenchymal stem cells. Proposed to be involved in epithelial-to-mesenchymal transition (EMT). However, another study suggests that it is not required for EMT or stem cell self-renewal and acts during later stages of differentiation. The chain is Motile sperm domain-containing protein 1 (Mospd1) from Rattus norvegicus (Rat).